The chain runs to 252 residues: DNA-(apurinic or apyrimidinic site) lyase Nei2 (252 aa).

The active-site Schiff-base intermediate with DNA is P2. E3 serves as the catalytic Proton donor. The active-site Proton donor (in beta-elimination) is K51. The FPG-type zinc-finger motif lies at 216–250 (WVYGRAGEPCRRCGTLIQTDRGGERVTYWCPVCQT). Zn(2+)-binding residues include C225, C228, C245, and C248.

The protein belongs to the FPG family. As to quaternary structure, monomer. Zn(2+) serves as cofactor.

It catalyses the reaction 2'-deoxyribonucleotide-(2'-deoxyribose 5'-phosphate)-2'-deoxyribonucleotide-DNA = a 3'-end 2'-deoxyribonucleotide-(2,3-dehydro-2,3-deoxyribose 5'-phosphate)-DNA + a 5'-end 5'-phospho-2'-deoxyribonucleoside-DNA + H(+). Functionally, involved in base excision repair of DNA damaged by oxidation or by mutagenic agents. Acts as DNA glycosylase that recognizes and removes damaged bases. Its function is as follows. Involved in the repair of psoralen-UVA DNA cross-links. A lyase that cleaves single-stranded (ss)DNA but not double-stranded (ds)DNA with an abasic site. Has 5-hydroxyuracil (5-OH-U) glycosylase activity on ssDNA with 5-OH-U, with 10-fold less activity on dsDNA, but weak to no uracil glycosylase activity. Has weak glycosylase activity on thymine glycol and dihydrothymine residues in ssDNA. Cleaves the DNA backbone by beta-delta elimination to generate a single-strand break at the site of the removed base with both 3'- and 5'-phosphates. This chain is DNA-(apurinic or apyrimidinic site) lyase Nei2, found in Mycolicibacterium smegmatis (strain ATCC 700084 / mc(2)155) (Mycobacterium smegmatis).